Reading from the N-terminus, the 750-residue chain is Neprilysin (750 aa).

The span at 1–14 shows a compositional bias: polar residues; the sequence is MGRSESQMDITDIN. The tract at residues 1 to 20 is disordered; the sequence is MGRSESQMDITDINTPKPKK. Glycine 2 is lipidated: N-myristoyl glycine. The Cytoplasmic portion of the chain corresponds to 2 to 28; that stretch reads GRSESQMDITDINTPKPKKKQRWTPLE. Phosphoserine is present on residues serine 4 and serine 6. The Stop-transfer sequence motif lies at 16-23; sequence PKPKKKQR. A helical; Signal-anchor for type II membrane protein transmembrane segment spans residues 29-51; the sequence is ISLSVLVLLLTVIAVTMIALYAT. Topologically, residues 52-750 are extracellular; the sequence is YDDGICKSSD…MNPEKKCRVW (699 aa). The 695-residue stretch at 56-750 folds into the Peptidase M13 domain; the sequence is ICKSSDCIKS…MNPEKKCRVW (695 aa). Disulfide bonds link cysteine 57/cysteine 62, cysteine 80/cysteine 735, cysteine 88/cysteine 695, cysteine 143/cysteine 411, cysteine 234/cysteine 242, and cysteine 621/cysteine 747. Arginine 103 is a binding site for a peptide. Asparagine 145 is a glycosylation site (N-linked (GlcNAc...) asparagine). N-linked (GlcNAc...) asparagine glycosylation is found at asparagine 285, asparagine 311, and asparagine 325. Histidine 584 contributes to the Zn(2+) binding site. Glutamate 585 is an active-site residue. Histidine 588 provides a ligand contact to Zn(2+). N-linked (GlcNAc...) asparagine glycosylation is present at asparagine 628. Glutamate 647 is a Zn(2+) binding site. Aspartate 651 serves as the catalytic Proton donor.

It belongs to the peptidase M13 family. The cofactor is Zn(2+). In terms of processing, myristoylation is a determinant of membrane targeting. Post-translationally, glycosylation at Asn-628 is necessary both for surface expression and neutral endopeptidase activity.

It localises to the cell membrane. The catalysed reaction is Preferential cleavage of polypeptides between hydrophobic residues, particularly with Phe or Tyr at P1'.. It catalyses the reaction substance P + H2O = substance P(1-9) + L-Leu-L-Met-NH2. It carries out the reaction substance P + H2O = substance P(1-7) + L-Phe-Gly-L-Leu-L-Met-NH2. The enzyme catalyses neurotensin + H2O = neurotensin(1-11) + L-isoleucyl-L-leucine. The catalysed reaction is neurotensin + H2O = neurotensin(1-10) + L-tyrosyl-L-isoleucyl-L-leucine. Its activity is regulated as follows. Inhibited by mixanpril, an orally-active drug used for the treatment of hypertension. Its function is as follows. Thermolysin-like specificity, but is almost confined on acting on polypeptides of up to 30 amino acids. Biologically important in the destruction of opioid peptides such as Met- and Leu-enkephalins by cleavage of a Gly-Phe bond. Catalyzes cleavage of bradykinin, substance P and neurotensin peptides. Able to cleave angiotensin-1, angiotensin-2 and angiotensin 1-9. Involved in the degradation of atrial natriuretic factor (ANF) and brain natriuretic factor (BNP(1-32)). Displays UV-inducible elastase activity toward skin preelastic and elastic fibers. In Oryctolagus cuniculus (Rabbit), this protein is Neprilysin (MME).